The following is a 294-amino-acid chain: Protein PET54 (294 aa).

The protein localises to the mitochondrion inner membrane. Functionally, activator of specific mitochondrial mRNAs. PET54 is involved in the excision of intron aI5-beta from pre-mRNA for cytochrome c oxidase I (COX1) and plays a role in promoting the translation of COX3. The sequence is that of Protein PET54 (PET54) from Saccharomyces bayanus (Yeast).